A 243-amino-acid polypeptide reads, in one-letter code: Probable transcriptional regulatory protein Smal_3128 (243 aa).

The protein belongs to the TACO1 family.

The protein localises to the cytoplasm. This chain is Probable transcriptional regulatory protein Smal_3128, found in Stenotrophomonas maltophilia (strain R551-3).